Reading from the N-terminus, the 309-residue chain is Glutaminase (309 aa).

Residues S64, N114, E160, N167, Y191, Y243, and V261 each contribute to the substrate site.

This sequence belongs to the glutaminase family. In terms of assembly, homotetramer.

The enzyme catalyses L-glutamine + H2O = L-glutamate + NH4(+). The sequence is that of Glutaminase from Rhizobium etli (strain CIAT 652).